The primary structure comprises 464 residues: Argininosuccinate lyase (464 aa).

This sequence belongs to the lyase 1 family. Argininosuccinate lyase subfamily.

It localises to the cytoplasm. The enzyme catalyses 2-(N(omega)-L-arginino)succinate = fumarate + L-arginine. It functions in the pathway amino-acid biosynthesis; L-arginine biosynthesis; L-arginine from L-ornithine and carbamoyl phosphate: step 3/3. The polypeptide is Argininosuccinate lyase (Pseudomonas syringae pv. syringae (strain B728a)).